Here is a 291-residue protein sequence, read N- to C-terminus: MKKVIAITGPTASGKTSLSIKIAKKFNLEIINCDSLQMYQKYDIGTAKITIEEAQGIKHHLLDFLTPGTNYNIYYFQKDARKKIEEMPLPLFVGGSGLYLKSVLFDYELTPKSLFLPPISLTAIENMVDFIKKKDPQLIANLDLKNPRRILSAYQDLLSGTLRSQKNKKHNPLYSSLIFYLDIDRQILKKRVILRLEQMLKKGFIEEVNQIQTFFPNANFNIIGYREIKVLLEGKITLDQAKTLIIQKTMQYAKRQKTWFKNQIKPMILDALSPDLEKTTIGLINNFLKTD.

Glycine 9–threonine 16 serves as a coordination point for ATP. Position 11–16 (threonine 11–threonine 16) interacts with substrate. The interaction with substrate tRNA stretch occupies residues aspartate 34 to glutamine 37.

This sequence belongs to the IPP transferase family. In terms of assembly, monomer. Mg(2+) serves as cofactor.

It catalyses the reaction adenosine(37) in tRNA + dimethylallyl diphosphate = N(6)-dimethylallyladenosine(37) in tRNA + diphosphate. Catalyzes the transfer of a dimethylallyl group onto the adenine at position 37 in tRNAs that read codons beginning with uridine, leading to the formation of N6-(dimethylallyl)adenosine (i(6)A). The protein is tRNA dimethylallyltransferase of Aster yellows witches'-broom phytoplasma (strain AYWB).